Consider the following 1704-residue polypeptide: Arf-GAP with Rho-GAP domain, ANK repeat and PH domain-containing protein 2 (1704 aa).

Residues 6-70 enclose the SAM domain; that stretch reads EVNVDIKDFL…LKQLQIILSK (65 aa). Tyr-77 carries the phosphotyrosine modification. The interval 126–161 is disordered; that stretch reads NLEDSDASVERSQYPQSDDKLSPPKRDFPTAEEPHL. Residues 142–160 show a composition bias toward basic and acidic residues; sequence SDDKLSPPKRDFPTAEEPH. PH domains follow at residues 482-574 and 587-679; these read KKVK…NALK and TPEK…QSIA. The Arf-GAP domain maps to 676–811; that stretch reads QSIAETLSDY…TLLASLTKEE (136 aa). The C4-type zinc-finger motif lies at 700–723; it reads CADCKAPDPDWASINLCVVICKKC. PH domains lie at 878 to 1003 and 1014 to 1114; these read DIHS…KHFV and DYDL…AGTD. Positions 1116–1297 constitute a Rho-GAP domain; it reads NALQDQQLSK…DLINNYVEIF (182 aa). Residues 1326-1420 enclose the Ras-associating domain; the sequence is GDLLIEVYVE…AYLVVKRFLT (95 aa). A PH 5 domain is found at 1434-1537; that stretch reads GSIKEGILKI…WMTSIFIAQH (104 aa). Ser-1632 is subject to Phosphoserine. A disordered region spans residues 1636 to 1675; that stretch reads LEDTEPEAPLGQPKGHKGLKTLRKTEDRNSKATLDSDHKL. The span at 1658–1675 shows a compositional bias: basic and acidic residues; sequence RKTEDRNSKATLDSDHKL.

Detected in brain, thymus, lymph node, thyroid, spinal cord, trachea, heart, skeletal muscle, spleen, kidney, liver, placenta, lung and peripheral blood leukocytes.

It is found in the cytoplasm. Phosphatidylinositol 3,4,5-trisphosphate-dependent GTPase-activating protein that modulates actin cytoskeleton remodeling by regulating ARF and RHO family members. Is activated by phosphatidylinositol 3,4,5-trisphosphate (PtdIns(3,4,5)P3) binding. Can be activated by phosphatidylinositol 3,4-bisphosphate (PtdIns(3,4,5)P2) binding, albeit with lower efficiency. This Homo sapiens (Human) protein is Arf-GAP with Rho-GAP domain, ANK repeat and PH domain-containing protein 2 (ARAP2).